Here is a 452-residue protein sequence, read N- to C-terminus: BUB3-interacting and GLEBS motif-containing protein ZNF207 (452 aa).

Residues 1-92 (MGRKKKKQLK…EGIPEKDMEE (92 aa)) are microtubule-binding region. 2 consecutive C2H2-type zinc fingers follow at residues 11-34 (PWCW…KAKH) and 35-58 (FKCH…MQVH). Disordered stretches follow at residues 99–131 (QKTQ…SFQQ) and 298–330 (STMS…TSAT). The span at 113-123 (DDSDYDDDDDT) shows a compositional bias: acidic residues. A GLEBS region spans residues 329 to 361 (ATSKLVHPDEDISLEEKRAQLPKYQRNLPRPGQ).

As to quaternary structure, interacts (via GLEBS region) with bub3.

It localises to the nucleus. Its subcellular location is the chromosome. It is found in the centromere. The protein resides in the kinetochore. The protein localises to the cytoplasm. It localises to the cytoskeleton. Its subcellular location is the spindle. Functionally, kinetochore- and microtubule-binding protein that plays a key role in spindle assembly. Znf207/BuGZ is mainly composed of disordered low-complexity regions and undergoes phase transition or coacervation to form temperature-dependent liquid droplets. Coacervation promotes microtubule bundling and concentrates tubulin, promoting microtubule polymerization and assembly of spindle and spindle matrix by concentrating its building blocks. The sequence is that of BUB3-interacting and GLEBS motif-containing protein ZNF207 from Xenopus laevis (African clawed frog).